The primary structure comprises 311 residues: Aspartate carbamoyltransferase catalytic subunit (311 aa).

Carbamoyl phosphate contacts are provided by arginine 58 and threonine 59. Lysine 86 contributes to the L-aspartate binding site. Arginine 108, histidine 136, and glutamine 139 together coordinate carbamoyl phosphate. Residues arginine 169 and arginine 223 each contribute to the L-aspartate site. Residues glycine 264 and proline 265 each coordinate carbamoyl phosphate.

It belongs to the aspartate/ornithine carbamoyltransferase superfamily. ATCase family. Heterododecamer (2C3:3R2) of six catalytic PyrB chains organized as two trimers (C3), and six regulatory PyrI chains organized as three dimers (R2).

The enzyme catalyses carbamoyl phosphate + L-aspartate = N-carbamoyl-L-aspartate + phosphate + H(+). It participates in pyrimidine metabolism; UMP biosynthesis via de novo pathway; (S)-dihydroorotate from bicarbonate: step 2/3. Its function is as follows. Catalyzes the condensation of carbamoyl phosphate and aspartate to form carbamoyl aspartate and inorganic phosphate, the committed step in the de novo pyrimidine nucleotide biosynthesis pathway. The polypeptide is Aspartate carbamoyltransferase catalytic subunit (Desulfosudis oleivorans (strain DSM 6200 / JCM 39069 / Hxd3) (Desulfococcus oleovorans)).